Consider the following 113-residue polypeptide: Hydrogenase maturation factor HypA (113 aa).

His-2 is a Ni(2+) binding site. The Zn(2+) site is built by Cys-70, Cys-73, Cys-86, and Cys-88.

It belongs to the HypA/HybF family.

Functionally, involved in the maturation of [NiFe] hydrogenases. Required for nickel insertion into the metal center of the hydrogenase. The chain is Hydrogenase maturation factor HypA from Nostoc sp. (strain PCC 7120 / SAG 25.82 / UTEX 2576).